The sequence spans 503 residues: UDP-N-acetylmuramate--L-alanine ligase (503 aa).

120-126 provides a ligand contact to ATP; sequence GTHGKTS.

The protein belongs to the MurCDEF family.

Its subcellular location is the cytoplasm. It catalyses the reaction UDP-N-acetyl-alpha-D-muramate + L-alanine + ATP = UDP-N-acetyl-alpha-D-muramoyl-L-alanine + ADP + phosphate + H(+). It participates in cell wall biogenesis; peptidoglycan biosynthesis. Functionally, cell wall formation. The polypeptide is UDP-N-acetylmuramate--L-alanine ligase (Rhodococcus jostii (strain RHA1)).